The sequence spans 921 residues: Translation initiation factor IF-2 (921 aa).

The segment at 1-296 is disordered; that stretch reads MADQNTPGDK…PGPQKQRGRL (296 aa). A compositionally biased stretch (low complexity) spans 80-89; sequence RPSGPRPSGG. The span at 117–183 shows a compositional bias: basic and acidic residues; sequence ARVRDLEERR…AKKRFGEGEA (67 aa). Low complexity-rich tracts occupy residues 184 to 237 and 248 to 257; these read PRPA…ARPA and GRAPAAVAAG. The tr-type G domain occupies 417 to 586; the sequence is PRSPVVTVMG…MIALQADILD (170 aa). Residues 426-433 are G1; sequence GHVDHGKT. Residue 426-433 participates in GTP binding; that stretch reads GHVDHGKT. The interval 451 to 455 is G2; sequence GITQH. The G3 stretch occupies residues 474–477; that stretch reads DTPG. Residues 474-478 and 528-531 each bind GTP; these read DTPGH and NKID. Residues 528 to 531 are G4; that stretch reads NKID. The tract at residues 564-566 is G5; sequence SAK.

The protein belongs to the TRAFAC class translation factor GTPase superfamily. Classic translation factor GTPase family. IF-2 subfamily.

The protein resides in the cytoplasm. One of the essential components for the initiation of protein synthesis. Protects formylmethionyl-tRNA from spontaneous hydrolysis and promotes its binding to the 30S ribosomal subunits. Also involved in the hydrolysis of GTP during the formation of the 70S ribosomal complex. This is Translation initiation factor IF-2 from Bradyrhizobium sp. (strain ORS 278).